A 436-amino-acid polypeptide reads, in one-letter code: Sulfopropanediol 3-dehydrogenase (436 aa).

Y118, Q180, and N203 together coordinate NAD(+). Zn(2+) contacts are provided by Q248 and H251. Active-site proton acceptor residues include E318 and H319. Positions 352 and 411 each coordinate Zn(2+).

The protein belongs to the histidinol dehydrogenase family. HpsN subfamily. Zn(2+) serves as cofactor.

The enzyme catalyses (2R)-3-sulfopropanediol + 2 NAD(+) + H2O = (2R)-3-sulfolactate + 2 NADH + 3 H(+). Its function is as follows. Catalyzes the NAD-dependent oxidation of (R)-2,3-dihydroxypropane-1-sulfonate to (R)-3-sulfolactate. The sequence is that of Sulfopropanediol 3-dehydrogenase from Cupriavidus pinatubonensis (strain JMP 134 / LMG 1197) (Cupriavidus necator (strain JMP 134)).